Here is a 333-residue protein sequence, read N- to C-terminus: Procathepsin L (333 aa).

An N-terminal signal peptide occupies residues M1 to A17. Positions T18 to E113 are cleaved as a propeptide — activation peptide. Zn(2+) is bound at residue E122. 2 cysteine pairs are disulfide-bonded: C135–C178 and C169–C211. C138 is an active-site residue. Residues E163, D184, E199, E205, E209, D227, D250, H253, D273, and D275 each coordinate Zn(2+). C269 and C322 are oxidised to a cystine. The active site involves H276. Positions E289 to D291 are excised as a propeptide. N300 is a catalytic residue.

Belongs to the peptidase C1 family. In terms of assembly, dimer of a heavy and a light chain linked by disulfide bonds. Interacts with Long isoform of CD74/Ii chain; the interaction stabilizes the conformation of mature CTSL. During export along the endocytic pathway, pro-CTSL undergoes several proteolytic cleavages to generate the CTSL single-chain and two-chain mature forms, composed of a heavy chain linked to a light chain by disulfide bonds. Autocleavage; produces the single-chain CTSL after cleavage of the propeptide. The cleavage can be intermolecular.

The protein resides in the lysosome. The protein localises to the apical cell membrane. It is found in the cytoplasmic vesicle. Its subcellular location is the secretory vesicle. It localises to the chromaffin granule. The protein resides in the secreted. The protein localises to the extracellular space. The catalysed reaction is Specificity close to that of papain. As compared to cathepsin B, cathepsin L exhibits higher activity toward protein substrates, but has little activity on Z-Arg-Arg-NHMec, and no peptidyl-dipeptidase activity.. With respect to regulation, inhibited by the propeptide produced by autocleavage. Long isoform of CD74/Ii chain stabilizes the conformation of mature CTSL by binding to its active site and serving as a chaperone to help maintain a pool of mature enzyme in endocytic compartments and extracellular space of APCs. IFNG enhances the conversion into the CTSL mature and active form. Inhibited by CST6. Inhibited by the glycopeptide antibiotic teicoplanin. Inhibited by amantadine. Its function is as follows. Thiol protease important for the overall degradation of proteins in lysosomes. Plays a critical for normal cellular functions such as general protein turnover, antigen processing and bone remodeling. Involved in the solubilization of cross-linked TG/thyroglobulin and in the subsequent release of thyroid hormone thyroxine (T4) by limited proteolysis of TG/thyroglobulin in the thyroid follicle lumen. In neuroendocrine chromaffin cells secretory vesicles, catalyzes the prohormone proenkephalin processing to the active enkephalin peptide neurotransmitter. In thymus, regulates CD4(+) T cell positive selection by generating the major histocompatibility complex class II (MHCII) bound peptide ligands presented by cortical thymic epithelial cells. Also mediates invariant chain processing in cortical thymic epithelial cells. Major elastin-degrading enzyme at neutral pH. Accumulates as a mature and active enzyme in the extracellular space of antigen presenting cells (APCs) to regulate degradation of the extracellular matrix in the course of inflammation. Secreted form generates endostatin from COL18A1. Critical for cardiac morphology and function. Plays an important role in hair follicle morphogenesis and cycling, as well as epidermal differentiation. Required for maximal stimulation of steroidogenesis by TIMP1. This Chlorocebus aethiops (Green monkey) protein is Procathepsin L (CTSL).